A 294-amino-acid chain; its full sequence is 4-hydroxy-tetrahydrodipicolinate synthase (294 aa).

Pyruvate is bound at residue Ser47. The Proton donor/acceptor role is filled by Tyr135. Lys163 serves as the catalytic Schiff-base intermediate with substrate. Position 205 (Ile205) interacts with pyruvate.

It belongs to the DapA family. Homotetramer; dimer of dimers.

It localises to the cytoplasm. The catalysed reaction is L-aspartate 4-semialdehyde + pyruvate = (2S,4S)-4-hydroxy-2,3,4,5-tetrahydrodipicolinate + H2O + H(+). Its pathway is amino-acid biosynthesis; L-lysine biosynthesis via DAP pathway; (S)-tetrahydrodipicolinate from L-aspartate: step 3/4. Catalyzes the condensation of (S)-aspartate-beta-semialdehyde [(S)-ASA] and pyruvate to 4-hydroxy-tetrahydrodipicolinate (HTPA). In Ralstonia nicotianae (strain ATCC BAA-1114 / GMI1000) (Ralstonia solanacearum), this protein is 4-hydroxy-tetrahydrodipicolinate synthase.